The primary structure comprises 223 residues: Phosphoribosylformylglycinamidine synthase subunit PurQ (223 aa).

Residues 3–223 form the Glutamine amidotransferase type-1 domain; that stretch reads FAVLVFPGSN…MVNSWREQNV (221 aa). The active-site Nucleophile is Cys85. Residues His193 and Glu195 contribute to the active site.

In terms of assembly, part of the FGAM synthase complex composed of 1 PurL, 1 PurQ and 2 PurS subunits.

It localises to the cytoplasm. It carries out the reaction N(2)-formyl-N(1)-(5-phospho-beta-D-ribosyl)glycinamide + L-glutamine + ATP + H2O = 2-formamido-N(1)-(5-O-phospho-beta-D-ribosyl)acetamidine + L-glutamate + ADP + phosphate + H(+). It catalyses the reaction L-glutamine + H2O = L-glutamate + NH4(+). The protein operates within purine metabolism; IMP biosynthesis via de novo pathway; 5-amino-1-(5-phospho-D-ribosyl)imidazole from N(2)-formyl-N(1)-(5-phospho-D-ribosyl)glycinamide: step 1/2. Its function is as follows. Part of the phosphoribosylformylglycinamidine synthase complex involved in the purines biosynthetic pathway. Catalyzes the ATP-dependent conversion of formylglycinamide ribonucleotide (FGAR) and glutamine to yield formylglycinamidine ribonucleotide (FGAM) and glutamate. The FGAM synthase complex is composed of three subunits. PurQ produces an ammonia molecule by converting glutamine to glutamate. PurL transfers the ammonia molecule to FGAR to form FGAM in an ATP-dependent manner. PurS interacts with PurQ and PurL and is thought to assist in the transfer of the ammonia molecule from PurQ to PurL. The polypeptide is Phosphoribosylformylglycinamidine synthase subunit PurQ (Staphylococcus haemolyticus (strain JCSC1435)).